A 616-amino-acid polypeptide reads, in one-letter code: Large ribosomal subunit assembly factor BipA (616 aa).

Positions Lys-8–Lys-204 constitute a tr-type G domain. GTP-binding positions include Asp-20–Thr-25 and Asn-134–Asp-137.

It belongs to the TRAFAC class translation factor GTPase superfamily. Classic translation factor GTPase family. BipA subfamily. Monomer.

It localises to the cytoplasm. It catalyses the reaction GTP + H2O = GDP + phosphate + H(+). Functionally, a 50S ribosomal subunit assembly protein with GTPase activity, required for 50S subunit assembly at low temperatures, may also play a role in translation. Binds GTP and analogs. Binds the 70S ribosome between the 30S and 50S subunits, in a similar position as ribosome-bound EF-G; it contacts a number of ribosomal proteins, both rRNAs and the A-site tRNA. This is Large ribosomal subunit assembly factor BipA from Haemophilus influenzae (strain ATCC 51907 / DSM 11121 / KW20 / Rd).